Consider the following 506-residue polypeptide: Protein spinster homolog 1 (506 aa).

The tract at residues 1 to 42 (MSQADADITPFFADDNEGEGPVENGVGSPLPEDEEEESPSGV) is disordered. The span at 21-30 (PVENGVGSPL) shows a compositional bias: low complexity. Helical transmembrane passes span 52 to 71 (IVLCYINLLNYMDRFTVAGV), 87 to 107 (GLLQTVFICSYMFLAPLFGYL), 115 to 135 (LIMCVGIFFWSVVTLASSFIG), 149 to 169 (VGVGEASYSTIAPTIIADLFV), 176 to 196 (MLSIFYFAIPVGSGMGYIVGS), 207 to 227 (WALRVTPGLGLLAVFLLMLVV), 266 to 286 (FGFTAVAFVTGSLALWAPAFL), 310 to 330 (LIFGAITVVTGILGVASGVQA), 344 to 364 (LVCAAGLLLAAPFLYLSIMFA), 373 to 393 (VFIFLGETFLSMNWAIVADIL), 408 to 428 (FQIVLSHLLGDAISPYLIGVV), and 450 to 470 (LLCSFVAVAGGAFFLATAVFI).

It belongs to the major facilitator superfamily. Spinster (TC 2.A.1.49) family. Expressed in yolk cells.

The protein localises to the lysosome membrane. The enzyme catalyses a 1-acyl-sn-glycero-3-phosphocholine(out) + H(+)(out) = a 1-acyl-sn-glycero-3-phosphocholine(in) + H(+)(in). The catalysed reaction is a 1-acyl-sn-glycero-3-phosphoethanolamine(out) + H(+)(out) = a 1-acyl-sn-glycero-3-phosphoethanolamine(in) + H(+)(in). It catalyses the reaction a 1-O-(1Z-alkenyl)-sn-glycero-3-phosphocholine(out) + H(+)(out) = a 1-O-(1Z-alkenyl)-sn-glycero-3-phosphocholine(in) + H(+)(in). It carries out the reaction a 1-O-(1Z-alkenyl)-sn-glycero-3-phosphoethanolamine(out) + H(+)(out) = a 1-O-(1Z-alkenyl)-sn-glycero-3-phosphoethanolamine(in) + H(+)(in). Its function is as follows. Mediates the rate-limiting, proton-dependent, lysosomal efflux of lysophospholipids. Selective for zwitterionic headgroups such as lysophosphatidylcholine (LPC) and lysophosphatidylethanolamine (LPE). Essential player in lysosomal homeostasis. Critical for embryogenesis. Involved in the regulation of developmental senescence. The polypeptide is Protein spinster homolog 1 (spns1) (Danio rerio (Zebrafish)).